We begin with the raw amino-acid sequence, 504 residues long: MKLLEQIEKWAIETPDQTAFVWRDAKITYKQLKEDSDALAHWISSEYPDDRSPIMVYGHMQPEMIINFLGCVKAGHAYIPVDLSIPADRVQRIAENSGAKLLLSAATVTVTDLPVRIVSEDNLKDIFFTHKGNTPNPEHAVKGDENFYIIYTSGSTGNPKGVQITYNCLVSFTQWAVEDFNLQTGQVFLNQAPFSFDLSVMDIYPSLVTGGTLWAIDKDMIARPKDLFASLEQSDIQVWTSTPSFAEMCLMEASFSESMLPNMKTFLFCGEVLPNEVARKLIERFPKATIMNTYGPTEATVAVTGIHVTEEVLDQYKSLPVGYCKSDCRLLIMKEDGTIAPDGEKGEIVIVGPSVSVGYLGSPELTEKAFTMIDGERAYKTGDAGYVENGLLFYNGRLDFQIKLHGYRMELEEIEHHLRACSYVEGAVIVPIKKGEKYDYLLAVVVPGEHSFEKEFKLTSAIKKELNERLPNYMIPRKFMYQSSIPMTPNGKVDRKKLLSEVTA.

An ATP-binding site is contributed by 152–153 (TS). Position 197 (Asp197) interacts with D-alanine. ATP is bound at residue 292–297 (NTYGPT). Val301 contributes to the D-alanine binding site. ATP is bound by residues Asp383, 394-397 (YNGR), and Lys492. Residue Lys492 coordinates D-alanine.

The protein belongs to the ATP-dependent AMP-binding enzyme family. DltA subfamily.

Its subcellular location is the cytoplasm. It catalyses the reaction holo-[D-alanyl-carrier protein] + D-alanine + ATP = D-alanyl-[D-alanyl-carrier protein] + AMP + diphosphate. The protein operates within cell wall biogenesis; lipoteichoic acid biosynthesis. Catalyzes the first step in the D-alanylation of lipoteichoic acid (LTA), the activation of D-alanine and its transfer onto the D-alanyl carrier protein (Dcp) DltC. In an ATP-dependent two-step reaction, forms a high energy D-alanyl-AMP intermediate, followed by transfer of the D-alanyl residue as a thiol ester to the phosphopantheinyl prosthetic group of the Dcp. D-alanylation of LTA plays an important role in modulating the properties of the cell wall in Gram-positive bacteria, influencing the net charge of the cell wall. This chain is D-alanine--D-alanyl carrier protein ligase, found in Bacillus cereus (strain ZK / E33L).